Reading from the N-terminus, the 2587-residue chain is Fap1 adhesin (2587 aa).

Positions 1–85 are cleaved as a signal peptide; that stretch reads MGKYKRAGET…ATVVSGNVFA (85 aa). Disordered stretches follow at residues 107–158, 173–212, 515–539, and 568–2558; these read SSEN…SESV, SISE…DSVR, DSIP…KSIS, and ESIT…GENV. The interval 107–195 is ser-rich region 1, SRR1; the sequence is SSENFDSEKA…IVLSESGAAS (89 aa). Composition is skewed to low complexity over residues 121-158 and 173-191; these read SLSQ…SESV and SISE…LSES. The sufficient to block adherence to beads stretch occupies residues 191-522; that stretch reads SGAASGNKAT…NADSIPSDTT (332 aa). Residues 192 to 202 are compositionally biased toward polar residues; it reads GAASGNKATSK. The span at 203–212 shows a compositional bias: basic and acidic residues; it reads GTEEKQDSVR. The ser-rich region 2, SRR2 stretch occupies residues 516 to 2561; the sequence is SIPSDTTSQS…PNTGENVSSS (2046 aa). Composition is skewed to low complexity over residues 519 to 539 and 568 to 2545; these read SDTT…KSIS and ESIT…VSES. A required for localization to cell wall, fimbriae formation and adherence to saliva-coated hydroxyapatite beads (SHA) but not secretion region spans residues 2367–2587; sequence SESISESVSE…RKKRKSEDAE (221 aa). The LPXTG sorting signal signature appears at 2551 to 2555; that stretch reads LPNTG. The residue at position 2554 (Thr-2554) is a Pentaglycyl murein peptidoglycan amidated threonine. Positions 2555-2587 are cleaved as a propeptide — removed by sortase; it reads GENVSSSLGLVGLSGLLFGALLGRKKRKSEDAE.

It belongs to the serine-rich repeat protein (SRRP) family. In terms of processing, glycosylated; occurs within the cytoplasm. It is probable that most of the Ser residues in SSR1 and SSR2 are O-GlcNAcylated. Sequential glycosylation by sugar transferases are able to generate complex sugar polymorphisms.

The protein localises to the cytoplasm. The protein resides in the secreted. It is found in the cell wall. It localises to the fimbrium. Its function is as follows. The major structural element of fimbriae. Required for adherence to saliva-coated hydroxyapatite beads (SHA), an in vitro tooth model. A Fap1-dependent increase in adherence is seen as the pH is reduced from pH 8 to pH 5. The chain is Fap1 adhesin (fap1) from Streptococcus parasanguinis.